Reading from the N-terminus, the 332-residue chain is Glyceraldehyde-3-phosphate dehydrogenase 2 (332 aa).

Residues 11–12 (RI), Asp32, and Arg77 each bind NAD(+). Residues 148 to 150 (SCT), Thr179, 208 to 209 (TG), and Arg231 contribute to the D-glyceraldehyde 3-phosphate site. Cys149 functions as the Nucleophile in the catalytic mechanism. The residue at position 273 (Tyr273) is a Phosphotyrosine. Position 274 is a phosphothreonine (Thr274). Residue Asn313 participates in NAD(+) binding.

Belongs to the glyceraldehyde-3-phosphate dehydrogenase family. In terms of assembly, homotetramer.

It localises to the cytoplasm. It catalyses the reaction D-glyceraldehyde 3-phosphate + phosphate + NAD(+) = (2R)-3-phospho-glyceroyl phosphate + NADH + H(+). It functions in the pathway carbohydrate degradation; glycolysis; pyruvate from D-glyceraldehyde 3-phosphate: step 1/5. The chain is Glyceraldehyde-3-phosphate dehydrogenase 2 (Gapdh2) from Drosophila melanogaster (Fruit fly).